A 55-amino-acid chain; its full sequence is Large ribosomal subunit protein bL33 (55 aa).

Belongs to the bacterial ribosomal protein bL33 family.

This is Large ribosomal subunit protein bL33 from Yersinia pestis (strain Pestoides F).